The following is a 134-amino-acid chain: Methylglyoxal synthase (134 aa).

An MGS-like domain is found at 1–134; the sequence is MHIALIAHDE…DWRDLRRNDE (134 aa). Substrate is bound by residues His8, Lys12, 34–37, and 54–55; these read TGTT and SG. Asp60 serves as the catalytic Proton donor/acceptor. His87 is a binding site for substrate.

This sequence belongs to the methylglyoxal synthase family.

The catalysed reaction is dihydroxyacetone phosphate = methylglyoxal + phosphate. Its function is as follows. Catalyzes the formation of methylglyoxal from dihydroxyacetone phosphate. This Listeria innocua serovar 6a (strain ATCC BAA-680 / CLIP 11262) protein is Methylglyoxal synthase.